A 542-amino-acid polypeptide reads, in one-letter code: Putative selenium-binding protein (542 aa).

It belongs to the selenium-binding protein family.

The chain is Putative selenium-binding protein from Caenorhabditis elegans.